Reading from the N-terminus, the 269-residue chain is Hydroxyethylthiazole kinase (269 aa).

M43 contributes to the substrate binding site. ATP is bound by residues R119 and S165. A192 lines the substrate pocket.

The protein belongs to the Thz kinase family. The cofactor is Mg(2+).

It catalyses the reaction 5-(2-hydroxyethyl)-4-methylthiazole + ATP = 4-methyl-5-(2-phosphooxyethyl)-thiazole + ADP + H(+). The protein operates within cofactor biosynthesis; thiamine diphosphate biosynthesis; 4-methyl-5-(2-phosphoethyl)-thiazole from 5-(2-hydroxyethyl)-4-methylthiazole: step 1/1. In terms of biological role, catalyzes the phosphorylation of the hydroxyl group of 4-methyl-5-beta-hydroxyethylthiazole (THZ). In Glaesserella parasuis serovar 5 (strain SH0165) (Haemophilus parasuis), this protein is Hydroxyethylthiazole kinase.